The primary structure comprises 364 residues: Spermidine/putrescine import ATP-binding protein PotA (364 aa).

The 231-residue stretch at 5 to 235 (LSFKDVSKGF…PVNRFVADFI (231 aa)) folds into the ABC transporter domain. Position 37–44 (37–44 (GPSGCGKT)) interacts with ATP.

Belongs to the ABC transporter superfamily. Spermidine/putrescine importer (TC 3.A.1.11.1) family. In terms of assembly, the complex is composed of two ATP-binding proteins (PotA), two transmembrane proteins (PotB and PotC) and a solute-binding protein (PotD).

It is found in the cell membrane. The catalysed reaction is ATP + H2O + polyamine-[polyamine-binding protein]Side 1 = ADP + phosphate + polyamineSide 2 + [polyamine-binding protein]Side 1.. Part of the ABC transporter complex PotABCD involved in spermidine/putrescine import. Responsible for energy coupling to the transport system. The polypeptide is Spermidine/putrescine import ATP-binding protein PotA (Staphylococcus epidermidis (strain ATCC 35984 / DSM 28319 / BCRC 17069 / CCUG 31568 / BM 3577 / RP62A)).